The sequence spans 211 residues: Protein YCF54, chloroplastic (211 aa).

Residues 1-80 (MWSVTGALTV…GESTKYHFLV (80 aa)) constitute a chloroplast transit peptide.

It belongs to the ycf54 family. Interacts with LFNR1 and CRD1/CHL27 in chloroplasts.

It is found in the plastid. The protein resides in the chloroplast. In terms of biological role, involved in the biosynthesis of chlorophyll; acts probably as a scaffolding factor in the MgProto monomethylester (MgProtoME) cyclase complex to stabilize CRD1/CHL27, the catalytic subunit which catalyzes the formation of a fifth isocyclic ring to tetrapyrroles to form protochlorophyllide. The sequence is that of Protein YCF54, chloroplastic from Arabidopsis thaliana (Mouse-ear cress).